Here is a 338-residue protein sequence, read N- to C-terminus: Nicotinate-nucleotide--dimethylbenzimidazole phosphoribosyltransferase (338 aa).

The Proton acceptor role is filled by glutamate 305.

The protein belongs to the CobT family.

It carries out the reaction 5,6-dimethylbenzimidazole + nicotinate beta-D-ribonucleotide = alpha-ribazole 5'-phosphate + nicotinate + H(+). It participates in nucleoside biosynthesis; alpha-ribazole biosynthesis; alpha-ribazole from 5,6-dimethylbenzimidazole: step 1/2. Catalyzes the synthesis of alpha-ribazole-5'-phosphate from nicotinate mononucleotide (NAMN) and 5,6-dimethylbenzimidazole (DMB). In Sinorhizobium medicae (strain WSM419) (Ensifer medicae), this protein is Nicotinate-nucleotide--dimethylbenzimidazole phosphoribosyltransferase.